The following is a 400-amino-acid chain: Phosphoglycerate kinase (400 aa).

Substrate-binding positions include Asp-23–Asn-25, Arg-38, His-61–Arg-64, Arg-120, and Arg-153. ATP is bound by residues Lys-203, Glu-325, and Gly-355–Thr-358.

It belongs to the phosphoglycerate kinase family. Monomer.

Its subcellular location is the cytoplasm. The enzyme catalyses (2R)-3-phosphoglycerate + ATP = (2R)-3-phospho-glyceroyl phosphate + ADP. The protein operates within carbohydrate degradation; glycolysis; pyruvate from D-glyceraldehyde 3-phosphate: step 2/5. In Methylorubrum populi (strain ATCC BAA-705 / NCIMB 13946 / BJ001) (Methylobacterium populi), this protein is Phosphoglycerate kinase.